A 681-amino-acid chain; its full sequence is DNA ligase (681 aa).

NAD(+) is bound by residues 45-49 (DFDFD), 94-95 (SL), and glutamate 120. Lysine 122 acts as the N6-AMP-lysine intermediate in catalysis. Residues arginine 143, glutamate 177, lysine 289, and lysine 313 each coordinate NAD(+). Cysteine 403, cysteine 406, cysteine 421, and cysteine 426 together coordinate Zn(2+). Positions 593 to 681 (ADQQPFAGQS…SLKIDFKNLI (89 aa)) constitute a BRCT domain.

It belongs to the NAD-dependent DNA ligase family. LigA subfamily. It depends on Mg(2+) as a cofactor. Mn(2+) is required as a cofactor.

The catalysed reaction is NAD(+) + (deoxyribonucleotide)n-3'-hydroxyl + 5'-phospho-(deoxyribonucleotide)m = (deoxyribonucleotide)n+m + AMP + beta-nicotinamide D-nucleotide.. Its function is as follows. DNA ligase that catalyzes the formation of phosphodiester linkages between 5'-phosphoryl and 3'-hydroxyl groups in double-stranded DNA using NAD as a coenzyme and as the energy source for the reaction. It is essential for DNA replication and repair of damaged DNA. The polypeptide is DNA ligase (Leptospira interrogans serogroup Icterohaemorrhagiae serovar copenhageni (strain Fiocruz L1-130)).